Consider the following 343-residue polypeptide: Chlorophyll(ide) b reductase NOL, chloroplastic (343 aa).

Residues 1–54 (MAATAAYLPLRAQAQVGLAPLRPSGSAAAGARLPGRTARRRLAARGGPEAAGIR) constitute a chloroplast transit peptide. 78–102 (ITGSTKGIGYALAKEFLKAGDNVVI) is an NAD(+) binding site. Catalysis depends on tyrosine 228, which acts as the Proton acceptor.

It belongs to the short-chain dehydrogenases/reductases (SDR) family. Interacts with NCY1 to form a complex that acts as a chlorophyll b reductase. Expressed in leaves and stems. Also detected in non-photosynthetic tissues such as roots.

Its subcellular location is the plastid. The protein resides in the chloroplast thylakoid membrane. It carries out the reaction 7(1)-hydroxychlorophyllide a + NAD(+) = chlorophyllide b + NADH + H(+). The catalysed reaction is 7(1)-hydroxychlorophyllide a + NADP(+) = chlorophyllide b + NADPH + H(+). Functionally, required for chlorophyll b degradation. This chain is Chlorophyll(ide) b reductase NOL, chloroplastic (NOL), found in Oryza sativa subsp. japonica (Rice).